Here is a 275-residue protein sequence, read N- to C-terminus: Vitamin B12-binding protein (275 aa).

A signal peptide spans 1–27; it reads MKWIKSTGSIGLSLLLFLSSFSHSLYA. A Fe/B12 periplasmic-binding domain is found at 31–275; the sequence is RVISLSPSTT…LCQQLNDNGS (245 aa). A cyanocob(III)alamin-binding site is contributed by Tyr58. An intrachain disulfide couples Cys191 to Cys267.

Belongs to the BtuF family. As to quaternary structure, the complex is composed of two ATP-binding proteins (BtuD), two transmembrane proteins (BtuC) and a solute-binding protein (BtuF).

It localises to the periplasm. Its function is as follows. Part of the ABC transporter complex BtuCDF involved in vitamin B12 import. Binds vitamin B12 and delivers it to the periplasmic surface of BtuC. In Photorhabdus laumondii subsp. laumondii (strain DSM 15139 / CIP 105565 / TT01) (Photorhabdus luminescens subsp. laumondii), this protein is Vitamin B12-binding protein.